The primary structure comprises 256 residues: 5-keto-4-deoxy-D-glucarate aldolase (256 aa).

The active-site Proton acceptor is the H50. Q151 is a binding site for substrate. E153 lines the Mg(2+) pocket. Substrate is bound by residues S178 and D179. D179 lines the Mg(2+) pocket.

This sequence belongs to the HpcH/HpaI aldolase family. KDGluc aldolase subfamily. Homohexamer; trimer of dimers. Requires Mg(2+) as cofactor.

The catalysed reaction is 5-dehydro-4-deoxy-D-glucarate = 2-hydroxy-3-oxopropanoate + pyruvate. It catalyses the reaction 2-dehydro-3-deoxy-D-glucarate = 2-hydroxy-3-oxopropanoate + pyruvate. Its pathway is carbohydrate acid metabolism; galactarate degradation; D-glycerate from galactarate: step 2/3. Catalyzes the reversible retro-aldol cleavage of both 5-keto-4-deoxy-D-glucarate and 2-keto-3-deoxy-D-glucarate to pyruvate and tartronic semialdehyde. The sequence is that of 5-keto-4-deoxy-D-glucarate aldolase from Salmonella paratyphi A (strain ATCC 9150 / SARB42).